The sequence spans 442 residues: Protein cereblon (442 aa).

The segment at 1-45 is disordered; sequence MAGEGDQQDAAHNMGNHLPLLPAESEEEDEMEVEDQDSKEAKKPN. Residues 24–35 show a composition bias toward acidic residues; the sequence is ESEEEDEMEVED. At Ser25 the chain carries Phosphoserine. Residues 81–319 enclose the Lon N-terminal domain; that stretch reads IPVLPQVMMI…CELDIMNKCT (239 aa). The 109-residue stretch at 318-426 folds into the CULT domain; the sequence is CTSLCCKQCQ…LTRSALLPTI (109 aa). Zn(2+) is bound by residues Cys323 and Cys326. His378, Trp380, and Trp386 together coordinate (S)-thalidomide. The Zn(2+) site is built by Cys391 and Cys394.

This sequence belongs to the CRBN family. As to quaternary structure, interacts with KCNT1. Component of a DCX (DDB1-CUL4-X-box) protein ligase complex, at least composed of CRBN, CUL4A, DDB1 and RBX1. Interacts directly with DDB1. Interacts (in pomalidomide-bound form) with IKZF1 and IKZF3. Interacts with ILF2. Interacts with TRAF6 and ECSIT. Ubiquitinated, ubiquitination is mediated by its own DCX protein ligase complex. In terms of tissue distribution, widely expressed. Highly expressed in brain.

Its subcellular location is the cytoplasm. It localises to the nucleus. It is found in the membrane. It functions in the pathway protein modification; protein ubiquitination. Its function is as follows. Substrate recognition component of a DCX (DDB1-CUL4-X-box) E3 protein ligase complex that mediates the ubiquitination and subsequent proteasomal degradation of target proteins, such as MEIS2, ILF2 or GLUL. Normal degradation of key regulatory proteins is required for normal limb outgrowth and expression of the fibroblast growth factor FGF8. Maintains presynaptic glutamate release and consequently cognitive functions, such as memory and learning, by negatively regulating large-conductance calcium-activated potassium (BK) channels in excitatory neurons. Likely to function by regulating the assembly and neuronal surface expression of BK channels via its interaction with KCNT1. May also be involved in regulating anxiety-like behaviors via a BK channel-independent mechanism. Plays a negative role in TLR4 signaling by interacting with TRAF6 and ECSIT, leading to inhibition of ECSIT ubiquitination, an important step of the signaling. In Homo sapiens (Human), this protein is Protein cereblon (CRBN).